We begin with the raw amino-acid sequence, 805 residues long: MATERLTRVHSLKERLDETLTANRNEILALLSRLEAKGKGILQHHQVIAEFEEIPEESRQKLTDGAFGEVLRSTQEAIVLPPWVALAVRPRPGIWEYLRVNVHALVVENLQPAEFLKFKEELVDGSANGNFVLELDFEPFTASFPRPTLNKSIGNGVHFLNRHLSAKLFHDKESLHPLLEFLRLHSYKGKTLMLNDRIQNPDSLQHVLRKAEEYLSTIDPETPYSEFEHRFQEIGLERGWGDTAERVLESIQLLLDLLEAPDPCTLESFLDRIPMVFNVVILSPHGYFAQDDVLGYPDTGGQVVYILDQVRALESEMLSRIKKQGLDIIPRILIITRLLPDAVGTTCGQRLEKVYGTEHCHILRVPFRDEKGIVRKWISRFEVWPYLETYTEDVAHELAKELQSKPDLIVGNYSDGNIVASLLAHKLGVTQCTIAHALEKTKYPESDIYWKKFEEKYHFSCQFTADLFAMNHTDFIITSTFQEIAGSKDKVGQYESHTAFTLPGLYRVVHGIDVFDPKFNIVSPGADQTIYFPYTETSRRLTSFYPEIEELLYSSVENEEHICVLKDRNKPIIFTMARLDRVKNITGLVEWYGKNAKLRELVNLVVVAGDRRKESKDLEEIAEMKKMYGLIETYKLNGQFRWISSQMNRVRNGELYRVICDTKGAFVQPAVYEAFGLTVVEAMATGLPTFATLNGGPAEIIVHGKSGFHIDPYHGDRAADLLVEFFEKVKADPSHWDKISQGGLQRIEEKYTWTIYSQRLLTLTGVYGFWKHVSNLDRLESRRYLEMFYALKYRKLAESVPLAVE.

Residues 275–752 (MVFNVVILSP…GLQRIEEKYT (478 aa)) form a GT-B glycosyltransferase region.

This sequence belongs to the glycosyltransferase 1 family. Plant sucrose synthase subfamily.

It catalyses the reaction an NDP-alpha-D-glucose + D-fructose = a ribonucleoside 5'-diphosphate + sucrose + H(+). Its function is as follows. Sucrose-cleaving enzyme that provides UDP-glucose and fructose for various metabolic pathways. The protein is Sucrose synthase of Medicago sativa (Alfalfa).